A 443-amino-acid polypeptide reads, in one-letter code: Aspartic protease PEP3 (443 aa).

The first 36 residues, 1 to 36, serve as a signal peptide directing secretion; sequence MQNRPRVFDSAMNLSPNMHFLSLMPGLLLLSLQVHT. A propeptide spans 37-107 (activation peptide); the sequence is SPTPLKKTIR…NTVSKAMQAN (71 aa). A Peptidase A1 domain is found at 123–440; it reads YLSPVTIGGQ…DLRGPSLHVA (318 aa). Asp-139 is an active-site residue. 2 N-linked (GlcNAc...) asparagine glycosylation sites follow: Asn-180 and Asn-293. Residue Asp-327 is part of the active site. A disulfide bridge connects residues Cys-363 and Cys-403. 2 N-linked (GlcNAc...) asparagine glycosylation sites follow: Asn-364 and Asn-388.

The protein belongs to the peptidase A1 family. In terms of assembly, monomer.

It localises to the secreted. Secreted aspartic endopeptidase that allows assimilation of proteinaceous substrates. The scissile peptide bond is attacked by a nucleophilic water molecule activated by two aspartic residues in the active site. Shows a broad primary substrate specificity. Favors hydrophobic residues at the P1 and P1' positions. The polypeptide is Aspartic protease PEP3 (Coccidioides posadasii (strain C735) (Valley fever fungus)).